Consider the following 458-residue polypeptide: Cysteine--tRNA ligase (458 aa).

Cys29 lines the Zn(2+) pocket. The short motif at 31 to 41 is the 'HIGH' region element; sequence PTVYDFLHIGN. Residues Cys211, His236, and Glu240 each contribute to the Zn(2+) site. The 'KMSKS' region signature appears at 269–273; sequence KMSKS. Lys272 is a binding site for ATP.

Belongs to the class-I aminoacyl-tRNA synthetase family. As to quaternary structure, monomer. It depends on Zn(2+) as a cofactor.

It localises to the cytoplasm. The catalysed reaction is tRNA(Cys) + L-cysteine + ATP = L-cysteinyl-tRNA(Cys) + AMP + diphosphate. The sequence is that of Cysteine--tRNA ligase from Beijerinckia indica subsp. indica (strain ATCC 9039 / DSM 1715 / NCIMB 8712).